Reading from the N-terminus, the 501-residue chain is Raftlin-2 (501 aa).

Disordered stretches follow at residues 1 to 20 (MGCG…GKIF) and 196 to 239 (SWNE…RKGE). The N-myristoyl glycine moiety is linked to residue Gly2. Residue Cys3 is the site of S-palmitoyl cysteine attachment. Positions 220-233 (GQYQMEQNGSPTSS) are enriched in polar residues. A Phosphoserine modification is found at Ser405. A disordered region spans residues 407 to 449 (AQTPDKKASRHIKGEDKNKATSRSIGLDTTSSQPAESRHLPEE). Position 409 is a phosphothreonine (Thr409). Residues 410 to 425 (PDKKASRHIKGEDKNK) are compositionally biased toward basic and acidic residues. Polar residues predominate over residues 427 to 441 (TSRSIGLDTTSSQPA). A Phosphoserine modification is found at Ser430.

It belongs to the raftlin family.

The protein resides in the cell membrane. Upon bacterial lipopolysaccharide stimulation, mediates clathrin-dependent internalization of TLR4 in dendritic cells, resulting in activation of TICAM1-mediated signaling and subsequent IFNB1 production. May regulate B-cell antigen receptor-mediated signaling. In Homo sapiens (Human), this protein is Raftlin-2 (RFTN2).